A 364-amino-acid polypeptide reads, in one-letter code: tRNA-specific 2-thiouridylase MnmA 1 (364 aa).

ATP contacts are provided by residues 10–17 (GMSGGVDS) and M36. C106 serves as the catalytic Nucleophile. An intrachain disulfide couples C106 to C204. G130 provides a ligand contact to ATP. Positions 154 to 156 (KDQ) are interaction with tRNA. Residue C204 is the Cysteine persulfide intermediate of the active site. The interaction with tRNA stretch occupies residues 310 to 311 (RY).

Belongs to the MnmA/TRMU family.

The protein localises to the cytoplasm. It catalyses the reaction S-sulfanyl-L-cysteinyl-[protein] + uridine(34) in tRNA + AH2 + ATP = 2-thiouridine(34) in tRNA + L-cysteinyl-[protein] + A + AMP + diphosphate + H(+). Catalyzes the 2-thiolation of uridine at the wobble position (U34) of tRNA, leading to the formation of s(2)U34. The sequence is that of tRNA-specific 2-thiouridylase MnmA 1 from Thermoanaerobacter sp. (strain X514).